Consider the following 396-residue polypeptide: Dimethyladenosine transferase 2, mitochondrial (396 aa).

Residues 1–19 constitute a mitochondrion transit peptide; sequence MWIPVVGLPRRLRLSALAG. The segment at 44 to 64 is disordered; sequence LSDSSPQLWPEPDFRNPPRKA. S-adenosyl-L-methionine contacts are provided by valine 75, glutamate 124, and aspartate 150. Residues 330-331 form a DNA-binding region; that stretch reads RR.

Belongs to the class I-like SAM-binding methyltransferase superfamily. rRNA adenine N(6)-methyltransferase family. KsgA subfamily. As to quaternary structure, homodimer. Component of the mitochondrial transcription initiation complex, composed at least of TFB2M, TFAM and POLRMT. In this complex TFAM recruits POLRMT to the promoter whereas TFB2M induces structural changes in POLRMT to enable promoter opening and trapping of the DNA non-template strand. Interacts with mitochondrial RNA polymerase POLRMT. Interacts with TFAM. In terms of tissue distribution, ubiquitously expressed.

The protein localises to the mitochondrion. The catalysed reaction is adenosine in rRNA + S-adenosyl-L-methionine = N(6)-methyladenosine in rRNA + S-adenosyl-L-homocysteine + H(+). Its function is as follows. S-adenosyl-L-methionine-dependent rRNA methyltransferase which may methylate two specific adjacent adenosines in the loop of a conserved hairpin near the 3'-end of 12S mitochondrial rRNA. Component of the mitochondrial transcription initiation complex, composed at least of TFB2M, TFAM and POLRMT that is required for basal transcription of mitochondrial DNA. In this complex, TFAM recruits POLRMT to a specific promoter whereas TFB2M induces structural changes in POLRMT to enable promoter opening and trapping of the DNA non-template strand. Stimulates transcription independently of the methyltransferase activity. This is Dimethyladenosine transferase 2, mitochondrial from Homo sapiens (Human).